We begin with the raw amino-acid sequence, 199 residues long: Large ribosomal subunit protein bL25 (199 aa).

It belongs to the bacterial ribosomal protein bL25 family. CTC subfamily. Part of the 50S ribosomal subunit; part of the 5S rRNA/L5/L18/L25 subcomplex. Contacts the 5S rRNA. Binds to the 5S rRNA independently of L5 and L18.

In terms of biological role, this is one of the proteins that binds to the 5S RNA in the ribosome where it forms part of the central protuberance. The sequence is that of Large ribosomal subunit protein bL25 from Pelodictyon phaeoclathratiforme (strain DSM 5477 / BU-1).